A 295-amino-acid polypeptide reads, in one-letter code: UDP-N-acetylenolpyruvoylglucosamine reductase (295 aa).

An FAD-binding PCMH-type domain is found at 26 to 189 (VGGRADVLFK…VEAEFKGVNS (164 aa)). Arginine 169 is an active-site residue. Catalysis depends on cysteine 218, which acts as the Proton donor. Residue glutamate 288 is part of the active site.

The protein belongs to the MurB family. The cofactor is FAD.

Its subcellular location is the cytoplasm. It catalyses the reaction UDP-N-acetyl-alpha-D-muramate + NADP(+) = UDP-N-acetyl-3-O-(1-carboxyvinyl)-alpha-D-glucosamine + NADPH + H(+). It participates in cell wall biogenesis; peptidoglycan biosynthesis. Its function is as follows. Cell wall formation. This is UDP-N-acetylenolpyruvoylglucosamine reductase from Wolbachia pipientis wMel.